The chain runs to 353 residues: 3'-5' exonuclease (353 aa).

Positions 1 to 119 (MEKYLTKMPI…PSPEKEKPEK (119 aa)) are disordered. Composition is skewed to basic and acidic residues over residues 13–30 (KANE…ETPK) and 37–50 (KKDT…KENA). Residues 59-70 (TKGRPGRPAAKR) show a composition bias toward basic residues. Positions 71–90 (KNLDTPDVTEKLAMEEENPP) are enriched in basic and acidic residues. Residues Ser103, Ser109, and Ser111 each carry the phosphoserine modification. One can recognise a 3'-5' exonuclease domain in the interval 145 to 313 (VLQWVEKQKD…GQVIYRELER (169 aa)). Residues Asp162, Glu164, and Asp300 each contribute to the Mg(2+) site.

This sequence belongs to the WRNexo family.

The protein resides in the nucleus. Its function is as follows. Has exonuclease activity on both single-stranded and duplex templates bearing overhangs, but not blunt ended duplex DNA, and cleaves in a 3'-5' direction. Essential for the formation of DNA replication focal centers. Has an important role in maintaining genome stability. The protein is 3'-5' exonuclease of Drosophila melanogaster (Fruit fly).